Consider the following 468-residue polypeptide: 3-isopropylmalate dehydratase large subunit (468 aa).

[4Fe-4S] cluster contacts are provided by C347, C408, and C411.

The protein belongs to the aconitase/IPM isomerase family. LeuC type 1 subfamily. As to quaternary structure, heterodimer of LeuC and LeuD. Requires [4Fe-4S] cluster as cofactor.

It carries out the reaction (2R,3S)-3-isopropylmalate = (2S)-2-isopropylmalate. It functions in the pathway amino-acid biosynthesis; L-leucine biosynthesis; L-leucine from 3-methyl-2-oxobutanoate: step 2/4. Its function is as follows. Catalyzes the isomerization between 2-isopropylmalate and 3-isopropylmalate, via the formation of 2-isopropylmaleate. The chain is 3-isopropylmalate dehydratase large subunit from Janthinobacterium sp. (strain Marseille) (Minibacterium massiliensis).